Reading from the N-terminus, the 228-residue chain is L-ribulose-5-phosphate 4-epimerase UlaF (228 aa).

Substrate-binding positions include 26 to 27, 43 to 44, and 72 to 73; these read GN, SG, and SS. Residues D74, H93, and H95 each contribute to the Zn(2+) site. D118 serves as the catalytic Proton donor/acceptor. H167 provides a ligand contact to Zn(2+). The active-site Proton donor/acceptor is Y225.

This sequence belongs to the aldolase class II family. AraD/FucA subfamily. The cofactor is Zn(2+).

The enzyme catalyses L-ribulose 5-phosphate = D-xylulose 5-phosphate. It participates in cofactor degradation; L-ascorbate degradation; D-xylulose 5-phosphate from L-ascorbate: step 4/4. Its function is as follows. Catalyzes the isomerization of L-ribulose 5-phosphate to D-xylulose 5-phosphate. Is involved in the anaerobic L-ascorbate utilization. The polypeptide is L-ribulose-5-phosphate 4-epimerase UlaF (Escherichia coli O17:K52:H18 (strain UMN026 / ExPEC)).